The primary structure comprises 340 residues: MKAAVVTKDHRVSIEEKRLRELRPGEALVKTEYCGVCHTDLHVKNADFGDVTGVTLGHEGIGRVIKIADNVDSLKVGDRVSIAWMYAACGNCEYCTTGRETLCRDVLNAGYTVDGAMAEEVIVDANYAVKVPENLDPAAASSITCAGVTTYKAVKVSGIEPGQWLGVFGVGGLGNLALQYAKNVMGAKVVAFDINDDKLNFAKELGADAIINSTNVDPIEEVNRLTNNKGLDATVITAVAKTPFNQAVDVVKAGARVVAVGLPVDKMDLDIPRLVLDGIEVVGSLVGTRQDLREAFQFAAENKVIPKIQLRQLSEINDIFDEMEKGTITGRMVIDMKSTH.

Zn(2+) is bound by residues Cys-37, His-58, Cys-89, Cys-92, Cys-95, Cys-103, and Cys-145.

This sequence belongs to the zinc-containing alcohol dehydrogenase family. Zn(2+) is required as a cofactor.

It catalyses the reaction a primary alcohol + NAD(+) = an aldehyde + NADH + H(+). The catalysed reaction is a secondary alcohol + NAD(+) = a ketone + NADH + H(+). This chain is Alcohol dehydrogenase (adh), found in Staphylococcus epidermidis (strain ATCC 12228 / FDA PCI 1200).